We begin with the raw amino-acid sequence, 137 residues long: MLSPKKTRFRRQHRGRMKGLSSRGNQICFGKYGLQALEPAWITSRQIEAGRRAMTRNARRGGKIWVRIFPDKPVTIRPAETRMGSGKGSPEFWVSVVKPGRILYEMDGVTKNVAKRAIGIAASKMPIRTQFIFSEIK.

Basic residues predominate over residues 1 to 17 (MLSPKKTRFRRQHRGRM). The interval 1 to 21 (MLSPKKTRFRRQHRGRMKGLS) is disordered.

This sequence belongs to the universal ribosomal protein uL16 family. Part of the 50S ribosomal subunit.

Its subcellular location is the plastid. This Cuscuta obtusiflora (Peruvian dodder) protein is Large ribosomal subunit protein uL16c.